Consider the following 273-residue polypeptide: Putative pyruvate, phosphate dikinase regulatory protein (273 aa).

153-160 (GVSRTSKS) is a binding site for ADP.

It belongs to the pyruvate, phosphate/water dikinase regulatory protein family. PDRP subfamily.

The catalysed reaction is N(tele)-phospho-L-histidyl/L-threonyl-[pyruvate, phosphate dikinase] + ADP = N(tele)-phospho-L-histidyl/O-phospho-L-threonyl-[pyruvate, phosphate dikinase] + AMP + H(+). It carries out the reaction N(tele)-phospho-L-histidyl/O-phospho-L-threonyl-[pyruvate, phosphate dikinase] + phosphate + H(+) = N(tele)-phospho-L-histidyl/L-threonyl-[pyruvate, phosphate dikinase] + diphosphate. Bifunctional serine/threonine kinase and phosphorylase involved in the regulation of the pyruvate, phosphate dikinase (PPDK) by catalyzing its phosphorylation/dephosphorylation. The sequence is that of Putative pyruvate, phosphate dikinase regulatory protein from Ehrlichia canis (strain Jake).